A 2924-amino-acid polypeptide reads, in one-letter code: Probable polyketide synthase 6 (2924 aa).

Positions Glu-11–Glu-442 constitute a Ketosynthase family 3 (KS3) domain. Residues Cys-181, His-323, and His-362 each act as for beta-ketoacyl synthase activity in the active site. Residues Gly-635 to Tyr-668 form an acyl/malonyl transferase region. The active-site For acyl/malonyl transferase activity is the Ser-645. An N-terminal hotdog fold region spans residues Ile-925–Asn-1047. A PKS/mFAS DH domain is found at Ile-925–Ser-1210. His-959 (proton acceptor; for dehydratase activity) is an active-site residue. Positions Asn-1064–Ser-1210 are C-terminal hotdog fold. The active-site Proton donor; for dehydratase activity is the Asp-1122. The 78-residue stretch at Thr-2431–Leu-2508 folds into the Carrier domain. O-(pantetheine 4'-phosphoryl)serine is present on Ser-2468. A helical membrane pass occupies residues Lys-2551–Leu-2571.

The cofactor is pantetheine 4'-phosphate.

Its subcellular location is the membrane. Probable polyketide synthase. This chain is Probable polyketide synthase 6 (pks6), found in Dictyostelium discoideum (Social amoeba).